A 416-amino-acid polypeptide reads, in one-letter code: Probable mannose-6-phosphate isomerase (416 aa).

Zn(2+)-binding residues include glutamine 99, histidine 101, glutamate 126, and histidine 259. Residue arginine 278 is part of the active site.

This sequence belongs to the mannose-6-phosphate isomerase type 1 family. Zn(2+) is required as a cofactor.

Its subcellular location is the cytoplasm. The enzyme catalyses D-mannose 6-phosphate = D-fructose 6-phosphate. The protein operates within nucleotide-sugar biosynthesis; GDP-alpha-D-mannose biosynthesis; alpha-D-mannose 1-phosphate from D-fructose 6-phosphate: step 1/2. Involved in the synthesis of the GDP-mannose and dolichol-phosphate-mannose required for a number of critical mannosyl transfer reactions. This Caenorhabditis elegans protein is Probable mannose-6-phosphate isomerase.